A 291-amino-acid chain; its full sequence is N-acetylmannosamine kinase (291 aa).

Residues 5–12 (AIDIGGTK) and 132–139 (GVGGGVVS) contribute to the ATP site. Zn(2+)-binding residues include H156, C166, C168, and C173.

Belongs to the ROK (NagC/XylR) family. NanK subfamily. In terms of assembly, homodimer.

It carries out the reaction an N-acyl-D-mannosamine + ATP = an N-acyl-D-mannosamine 6-phosphate + ADP + H(+). It participates in amino-sugar metabolism; N-acetylneuraminate degradation; D-fructose 6-phosphate from N-acetylneuraminate: step 2/5. Its function is as follows. Catalyzes the phosphorylation of N-acetylmannosamine (ManNAc) to ManNAc-6-P. The sequence is that of N-acetylmannosamine kinase from Escherichia coli O139:H28 (strain E24377A / ETEC).